Consider the following 141-residue polypeptide: ATP synthase epsilon chain (141 aa).

It belongs to the ATPase epsilon chain family. As to quaternary structure, F-type ATPases have 2 components, CF(1) - the catalytic core - and CF(0) - the membrane proton channel. CF(1) has five subunits: alpha(3), beta(3), gamma(1), delta(1), epsilon(1). CF(0) has three main subunits: a, b and c.

The protein resides in the cell inner membrane. Produces ATP from ADP in the presence of a proton gradient across the membrane. The chain is ATP synthase epsilon chain from Burkholderia mallei (strain NCTC 10247).